The chain runs to 822 residues: Fibroblast growth factor receptor 1 (822 aa).

Positions Met-1–Ala-21 are cleaved as a signal peptide. Residues Arg-22–Glu-376 are Extracellular-facing. One can recognise an Ig-like C2-type 1 domain in the interval Pro-25–Ser-119. A disulfide bridge connects residues Cys-55 and Cys-101. Residues Asn-77 and Asn-117 are each glycosylated (N-linked (GlcNAc...) asparagine). The interval Asp-120–Glu-162 is disordered. The segment covering Ser-125–Ser-135 has biased composition (acidic residues). A compositionally biased stretch (basic and acidic residues) spans Ser-136–Lys-145. 2 consecutive Ig-like C2-type domains span residues Pro-158–Asp-246 and Pro-255–Thr-357. Residues Lys-160 to Lys-177 are heparin-binding. Cys-178 and Cys-230 are joined by a disulfide. 6 N-linked (GlcNAc...) asparagine glycosylation sites follow: Asn-227, Asn-240, Asn-264, Asn-296, Asn-317, and Asn-330. A disulfide bridge links Cys-277 with Cys-341. A helical transmembrane segment spans residues Ile-377–Tyr-397. Topologically, residues Lys-398–Arg-822 are cytoplasmic. Tyr-463 carries the phosphotyrosine; by autocatalysis modification. Residues Leu-478–Leu-767 enclose the Protein kinase domain. Residues Leu-484–Gly-490, Lys-514, Glu-562–Ala-564, and Asn-568 each bind ATP. Phosphotyrosine; by autocatalysis occurs at positions 583 and 585. Asp-623 (proton acceptor) is an active-site residue. ATP is bound by residues Arg-627 and Asp-641. Phosphotyrosine; by autocatalysis is present on residues Tyr-653, Tyr-654, Tyr-730, and Tyr-766. Positions Asp-782 to Glu-792 are enriched in polar residues. The interval Asp-782–Arg-822 is disordered.

This sequence belongs to the protein kinase superfamily. Tyr protein kinase family. Fibroblast growth factor receptor subfamily. Monomer. Homodimer after ligand binding. Interacts predominantly with FGF1 and FGF2, but can also interact with FGF3, FGF4, FGF5, FGF6, FGF8, FGF10, FGF19, FGF21, FGF22 and FGF23 (in vitro). Ligand specificity is determined by tissue-specific expression of isoforms, and differences in the third Ig-like domain are crucial for ligand specificity. Affinity for fibroblast growth factors (FGFs) is increased by heparan sulfate glycosaminoglycans that function as coreceptors. Likewise, KLB increases the affinity for FGF19, FGF21 and FGF23. Interacts (phosphorylated on Tyr-766) with PLCG1 (via SH2 domains). Interacts with FRS2. Interacts with RPS6KA1. Interacts (via C-terminus) with NEDD4 (via WW3 domain). Interacts with KL. Interacts with SHB (via SH2 domain). Interacts with GRB10. Interacts with ANOS1; this interaction does not interfere with FGF2-binding to FGFR1, but prevents binding of heparin-bound FGF2. Interacts with SOX2 and SOX3. Interacts with FLRT1, FLRT2 and FLRT3. Found in a ternary complex with FGF1 and ITGAV:ITGB3. Autophosphorylated. Binding of FGF family members together with heparan sulfate proteoglycan or heparin promotes receptor dimerization and autophosphorylation on tyrosine residues. Autophosphorylation occurs in trans between the two FGFR molecules present in the dimer and proceeds in a highly ordered manner. Initial autophosphorylation at Tyr-653 increases the kinase activity by a factor of 50 to 100. After this, Tyr-583 becomes phosphorylated, followed by phosphorylation of Tyr-463, Tyr-766, Tyr-583 and Tyr-585. In a third stage, Tyr-654 is autophosphorylated, resulting in a further tenfold increase of kinase activity. Phosphotyrosine residues provide docking sites for interacting proteins and so are crucial for FGFR1 function and its regulation. In terms of processing, ubiquitinated. FGFR1 is rapidly ubiquitinated by NEDD4 after autophosphorylation, leading to internalization and lysosomal degradation. CBL is recruited to activated FGFR1 via FRS2 and GRB2, and mediates ubiquitination and subsequent degradation of FGFR1. Post-translationally, N-glycosylated in the endoplasmic reticulum. The N-glycan chains undergo further maturation to an Endo H-resistant form in the Golgi apparatus. As to expression, widely expressed.

It localises to the cell membrane. It is found in the nucleus. The protein resides in the cytoplasm. The protein localises to the cytosol. Its subcellular location is the cytoplasmic vesicle. The enzyme catalyses L-tyrosyl-[protein] + ATP = O-phospho-L-tyrosyl-[protein] + ADP + H(+). Present in an inactive conformation in the absence of bound ligand. Ligand binding leads to dimerization and activation by sequential autophosphorylation on tyrosine residues. Functionally, tyrosine-protein kinase that acts as a cell-surface receptor for fibroblast growth factors and plays an essential role in the regulation of embryonic development, cell proliferation, differentiation and migration. Required for normal mesoderm patterning and correct axial organization during embryonic development, normal skeletogenesis and normal development of the gonadotropin-releasing hormone (GnRH) neuronal system. Phosphorylates PLCG1, FRS2, GAB1 and SHB. Ligand binding leads to the activation of several signaling cascades. Activation of PLCG1 leads to the production of the cellular signaling molecules diacylglycerol and inositol 1,4,5-trisphosphate. Phosphorylation of FRS2 triggers recruitment of GRB2, GAB1, PIK3R1 and SOS1, and mediates activation of RAS, MAPK1/ERK2, MAPK3/ERK1 and the MAP kinase signaling pathway, as well as of the AKT1 signaling pathway. Promotes phosphorylation of SHC1, STAT1 and PTPN11/SHP2. In the nucleus, enhances RPS6KA1 and CREB1 activity and contributes to the regulation of transcription. FGFR1 signaling is down-regulated by IL17RD/SEF, and by FGFR1 ubiquitination, internalization and degradation. This is Fibroblast growth factor receptor 1 (Fgfr1) from Mus musculus (Mouse).